The chain runs to 545 residues: Carboxypeptidase Y homolog A (545 aa).

Residues 1–17 form the signal peptide; that stretch reads MKSLALALLVGGAIAAG. A propeptide spanning residues 18–123 is cleaved from the precursor; the sequence is PQQQVLQAPV…KLEAYDLRVK (106 aa). 5 cysteine pairs are disulfide-bonded: C177–C416, C311–C325, C335–C358, C342–C351, and C380–C386. The N-linked (GlcNAc...) asparagine glycan is linked to N208. S264 is an active-site residue. D455 is a catalytic residue. Residues N485, N491, and N506 are each glycosylated (N-linked (GlcNAc...) asparagine). The active site involves H517.

It belongs to the peptidase S10 family.

It is found in the vacuole. It catalyses the reaction Release of a C-terminal amino acid with broad specificity.. Its function is as follows. Vacuolar carboxypeptidase involved in degradation of small peptides. Digests preferentially peptides containing an aliphatic or hydrophobic residue in P1' position, as well as methionine, leucine or phenylalanine in P1 position of ester substrate. The chain is Carboxypeptidase Y homolog A (CPYA) from Blastomyces gilchristii (strain SLH14081) (Blastomyces dermatitidis).